The sequence spans 226 residues: Biosynthetic peptidoglycan transglycosylase (226 aa).

A helical membrane pass occupies residues Val7–Gly29.

It belongs to the glycosyltransferase 51 family.

The protein resides in the cell inner membrane. It carries out the reaction [GlcNAc-(1-&gt;4)-Mur2Ac(oyl-L-Ala-gamma-D-Glu-L-Lys-D-Ala-D-Ala)](n)-di-trans,octa-cis-undecaprenyl diphosphate + beta-D-GlcNAc-(1-&gt;4)-Mur2Ac(oyl-L-Ala-gamma-D-Glu-L-Lys-D-Ala-D-Ala)-di-trans,octa-cis-undecaprenyl diphosphate = [GlcNAc-(1-&gt;4)-Mur2Ac(oyl-L-Ala-gamma-D-Glu-L-Lys-D-Ala-D-Ala)](n+1)-di-trans,octa-cis-undecaprenyl diphosphate + di-trans,octa-cis-undecaprenyl diphosphate + H(+). Its pathway is cell wall biogenesis; peptidoglycan biosynthesis. Peptidoglycan polymerase that catalyzes glycan chain elongation from lipid-linked precursors. In Nitrobacter winogradskyi (strain ATCC 25391 / DSM 10237 / CIP 104748 / NCIMB 11846 / Nb-255), this protein is Biosynthetic peptidoglycan transglycosylase.